The sequence spans 256 residues: tRNA pseudouridine synthase A 1 (256 aa).

Residue Asp53 is the Nucleophile of the active site. Residue Tyr111 participates in substrate binding.

The protein belongs to the tRNA pseudouridine synthase TruA family. As to quaternary structure, homodimer.

It carries out the reaction uridine(38/39/40) in tRNA = pseudouridine(38/39/40) in tRNA. Formation of pseudouridine at positions 38, 39 and 40 in the anticodon stem and loop of transfer RNAs. In Protochlamydia amoebophila (strain UWE25), this protein is tRNA pseudouridine synthase A 1.